The primary structure comprises 678 residues: Secretin ExeD (678 aa).

Residues 1–25 (MINKGKGWRLATVAAALMMAGSAWA) form the signal peptide. An N0 region spans residues 26–122 (TEYSASFKNA…VVDETNPGIG (97 aa)). The tract at residues 124-188 (EMVTRVVPVR…EVVRRVDKAG (65 aa)) is N1. Positions 189-264 (DQEVDIIKLK…MVRQLDRDLQ (76 aa)) are N2. The N3 stretch occupies residues 267 to 348 (GNTRVFYLKY…ELEQVVAKLD (82 aa)). Positions 353–602 (QVLVEAIIVE…VFIRPTILRD (250 aa)) are secretin. The s domain stretch occupies residues 604-678 (NVYSGISSNK…GVQPFVQGNK (75 aa)).

This sequence belongs to the bacterial secretin family. GSP D subfamily. In terms of assembly, forms a cylindrical channel with 15 subunits.

It is found in the cell outer membrane. Involved in a type II secretion system (T2SS, formerly general secretion pathway, GSP) for the export of proteins. This subunit forms the outer membrane channel. The sequence is that of Secretin ExeD (exeD) from Aeromonas hydrophila.